The chain runs to 158 residues: Transcription elongation factor GreA (158 aa).

It belongs to the GreA/GreB family.

Functionally, necessary for efficient RNA polymerase transcription elongation past template-encoded arresting sites. The arresting sites in DNA have the property of trapping a certain fraction of elongating RNA polymerases that pass through, resulting in locked ternary complexes. Cleavage of the nascent transcript by cleavage factors such as GreA or GreB allows the resumption of elongation from the new 3'terminus. GreA releases sequences of 2 to 3 nucleotides. The protein is Transcription elongation factor GreA of Agrobacterium fabrum (strain C58 / ATCC 33970) (Agrobacterium tumefaciens (strain C58)).